The following is a 480-amino-acid chain: Coronin-2B (480 aa).

WD repeat units follow at residues 85 to 125 (GHQG…LKRN), 135 to 177 (GHSR…KMID), 179 to 217 (HRDV…VLQE), 220 to 263 (CKTH…MPVT), and 265 to 308 (EEID…PYLT). Residues 436 to 475 (NELLRMFFRQQEEIRRLKEQLSQRDLLVRQLELELKNLRN) are a coiled coil.

Belongs to the WD repeat coronin family.

It is found in the cytoplasm. The protein localises to the cytoskeleton. Its function is as follows. May play a role in the reorganization of neuronal actin structure. In Xenopus tropicalis (Western clawed frog), this protein is Coronin-2B (coro2b).